The chain runs to 498 residues: ATP synthase subunit beta, chloroplastic (498 aa).

172-179 (GGAGVGKT) is a binding site for ATP.

It belongs to the ATPase alpha/beta chains family. In terms of assembly, F-type ATPases have 2 components, CF(1) - the catalytic core - and CF(0) - the membrane proton channel. CF(1) has five subunits: alpha(3), beta(3), gamma(1), delta(1), epsilon(1). CF(0) has four main subunits: a(1), b(1), b'(1) and c(9-12).

It localises to the plastid. The protein resides in the chloroplast thylakoid membrane. It catalyses the reaction ATP + H2O + 4 H(+)(in) = ADP + phosphate + 5 H(+)(out). Produces ATP from ADP in the presence of a proton gradient across the membrane. The catalytic sites are hosted primarily by the beta subunits. The polypeptide is ATP synthase subunit beta, chloroplastic (Lactuca sativa (Garden lettuce)).